Reading from the N-terminus, the 165-residue chain is Putative universal stress protein SH1215 (165 aa).

This sequence belongs to the universal stress protein A family.

Its subcellular location is the cytoplasm. The polypeptide is Putative universal stress protein SH1215 (Staphylococcus haemolyticus (strain JCSC1435)).